A 234-amino-acid chain; its full sequence is STARD3 N-terminal-like protein (234 aa).

An N-acetylmethionine modification is found at methionine 1. The Cytoplasmic segment spans residues 1 to 53 (MNHLPEDMENALTGSQSSHASLRNIHSINPTQLMARIESYEGREKKGISDVRR). Phosphoserine is present on residues serine 15, serine 21, and serine 27. Residues 48 to 218 (ISDVRRTFCL…YSPPESEAGS (171 aa)) enclose the MENTAL domain. Residues 54 to 74 (TFCLFVTFDLLFVTLLWIIEL) form a helical membrane-spanning segment. At 75 to 97 (NVNGGIENTLEKEVMQYDYYSSY) the chain is on the extracellular side. Residues 98–118 (FDIFLLAVFRFKVLILAYAVC) traverse the membrane as a helical segment. Topologically, residues 119–122 (RLRH) are cytoplasmic. Residues 123-143 (WWAIALTTAVTSAFLLAKVIL) traverse the membrane as a helical segment. At 144 to 150 (SKLFSQG) the chain is on the extracellular side. Residues 151–171 (AFGYVLPIISFILAWIETWFL) traverse the membrane as a helical segment. The Cytoplasmic portion of the chain corresponds to 172 to 234 (DFKVLPQEAE…QDSEKPLLEL (63 aa)). Serine 193 is modified (phosphoserine). The segment at 200–234 (PGGLSDGQFYSPPESEAGSEEAEEKQDSEKPLLEL) is disordered. Positions 208 to 213 (FYSPPE) match the FFAT motif. A compositionally biased stretch (basic and acidic residues) spans 224–234 (KQDSEKPLLEL).

This sequence belongs to the STARD3 family. As to quaternary structure, homodimer. Interacts (via the MENTAL domain) with STARD3NL. Interacts (via FFAT motif) with VAPA. Interacts (via FFAT motif) with VAPB. Interacts (via FFAT motif) with MOSPD2 (via MSP domain).

It localises to the late endosome membrane. In terms of biological role, tethering protein that creates contact site between the endoplasmic reticulum and late endosomes: localizes to late endosome membranes and contacts the endoplasmic reticulum via interaction with VAPA and VAPB. The polypeptide is STARD3 N-terminal-like protein (Homo sapiens (Human)).